Consider the following 443-residue polypeptide: MSFLWSLGSFIIAIAVLVSVHEYGHFWAARKCGIKVHRFSIGFGKVIWKRIDKYGTEFAVSMIPLGGYVKMLDGRNEVVPAEQKSQAFDSKSVLQRSFVIIAGPLANFIFAIFAYWVIYLYGMPTVKPVIESITPNSIAAQAHIEPNTQILTIDGEETQDWETINMLLATKMGEPNVEISLSPFNSNIEQQRTLNLTNWTFDPEKESAFEALGIMPMRPKIEMVLSKVVQNSPAEKAGLQIGDKILKENLTALPWQDFIKQVEQGESFSIKVERNGETFDKVLTPVRNQNGKWFVGVSPALTKLADEYRTELKYGILESLQKGIEKTGQLSLLTLKILGKLLTGDLSLNNLSGPISIAKGAGASANIGLVYFLSFMALISVNLGIMNLFPLPVLDGGHLVFLTMEAVKGKPVSERVQSICYRIGAALLLSLTVFALFNDFLRL.

His-21 serves as a coordination point for Zn(2+). Glu-22 is an active-site residue. His-25 is a binding site for Zn(2+). Residues 98 to 118 traverse the membrane as a helical segment; sequence FVIIAGPLANFIFAIFAYWVI. PDZ domains lie at 106–185 and 198–287; these read ANFI…SPFN and NWTF…TPVR. 2 consecutive transmembrane segments (helical) span residues 369 to 389 and 423 to 443; these read LVYFLSFMALISVNLGIMNLF and IGAALLLSLTVFALFNDFLRL.

This sequence belongs to the peptidase M50B family. Interacts with RseA. It depends on Zn(2+) as a cofactor.

Its subcellular location is the cell inner membrane. Its function is as follows. A site-2 regulated intramembrane protease (S2P) that cleaves a peptide bond in the transmembrane region of RseA. Part of a regulated intramembrane proteolysis (RIP) cascade. Acts on DegS-cleaved RseA to release the cytoplasmic domain of RseA. This provides the cell with sigma-E (RpoE) activity through the proteolysis of RseA. The chain is Regulator of sigma E protease (rsep) from Haemophilus influenzae (strain ATCC 51907 / DSM 11121 / KW20 / Rd).